The following is a 428-amino-acid chain: Gamma-glutamyl phosphate reductase (428 aa).

This sequence belongs to the gamma-glutamyl phosphate reductase family.

The protein resides in the cytoplasm. It carries out the reaction L-glutamate 5-semialdehyde + phosphate + NADP(+) = L-glutamyl 5-phosphate + NADPH + H(+). It functions in the pathway amino-acid biosynthesis; L-proline biosynthesis; L-glutamate 5-semialdehyde from L-glutamate: step 2/2. In terms of biological role, catalyzes the NADPH-dependent reduction of L-glutamate 5-phosphate into L-glutamate 5-semialdehyde and phosphate. The product spontaneously undergoes cyclization to form 1-pyrroline-5-carboxylate. This is Gamma-glutamyl phosphate reductase from Afipia carboxidovorans (strain ATCC 49405 / DSM 1227 / KCTC 32145 / OM5) (Oligotropha carboxidovorans).